A 243-amino-acid polypeptide reads, in one-letter code: Auxin-induced protein AUX28 (243 aa).

Positions 8-12 match the EAR-like (transcriptional repression) motif; it reads LRLGL. Positions 54–91 are disordered; the sequence is AATTAAAAADPTDKHKTLPKEKTLLPADPAKPPAKTQV. Positions 64–76 are enriched in basic and acidic residues; sequence PTDKHKTLPKEKT. Low complexity predominate over residues 77-89; sequence LLPADPAKPPAKT. The region spanning 123-223 is the PB1 domain; the sequence is ASFVKVSMDG…SCKRLRIMKG (101 aa).

Belongs to the Aux/IAA family. Homodimers and heterodimers.

The protein localises to the nucleus. Functionally, aux/IAA proteins are short-lived transcriptional factors that function as repressors of early auxin response genes at low auxin concentrations. Repression is thought to result from the interaction with auxin response factors (ARFs), proteins that bind to the auxin-responsive promoter element (AuxRE). Formation of heterodimers with ARF proteins may alter their ability to modulate early auxin response genes expression. This Glycine max (Soybean) protein is Auxin-induced protein AUX28 (AUX28).